The chain runs to 973 residues: FHF complex subunit HOOK-interacting protein 1B (973 aa).

Disordered stretches follow at residues 466 to 493 (SSPS…VVTV), 510 to 547 (SLGG…PGEL), and 573 to 647 (SAPY…EGAK). Serine 467 is subject to Phosphoserine. The span at 482–493 (SPSVDSSSVVTV) shows a compositional bias: low complexity. 4 positions are modified to phosphoserine: serine 510, serine 523, serine 529, and serine 533. Low complexity-rich tracts occupy residues 529-538 (SPASSPGRRP) and 622-639 (GARE…NGLP). Serine 859 and serine 898 each carry phosphoserine.

Belongs to the FHIP family. In terms of assembly, component of the FTS/Hook/FHIP complex (FHF complex), composed of AKTIP/FTS, FHIP1B, and one or more members of the Hook family of proteins HOOK1, HOOK2, and HOOK3. The FHF complex associates with the homotypic vesicular sorting complex (the HOPS complex).

Component of the FTS/Hook/FHIP complex (FHF complex). The FHF complex may function to promote vesicle trafficking and/or fusion via the homotypic vesicular protein sorting complex (the HOPS complex). FHF complex promotes the distribution of AP-4 complex to the perinuclear area of the cell. The sequence is that of FHF complex subunit HOOK-interacting protein 1B (FHIP1B) from Bos taurus (Bovine).